The following is a 351-amino-acid chain: Phosphoribosylformylglycinamidine cyclo-ligase (351 aa).

The protein belongs to the AIR synthase family.

Its subcellular location is the cytoplasm. It carries out the reaction 2-formamido-N(1)-(5-O-phospho-beta-D-ribosyl)acetamidine + ATP = 5-amino-1-(5-phospho-beta-D-ribosyl)imidazole + ADP + phosphate + H(+). It participates in purine metabolism; IMP biosynthesis via de novo pathway; 5-amino-1-(5-phospho-D-ribosyl)imidazole from N(2)-formyl-N(1)-(5-phospho-D-ribosyl)glycinamide: step 2/2. The chain is Phosphoribosylformylglycinamidine cyclo-ligase from Xylella fastidiosa (strain 9a5c).